A 446-amino-acid polypeptide reads, in one-letter code: Exodeoxyribonuclease 7 large subunit (446 aa).

The protein belongs to the XseA family. As to quaternary structure, heterooligomer composed of large and small subunits.

It is found in the cytoplasm. The catalysed reaction is Exonucleolytic cleavage in either 5'- to 3'- or 3'- to 5'-direction to yield nucleoside 5'-phosphates.. Bidirectionally degrades single-stranded DNA into large acid-insoluble oligonucleotides, which are then degraded further into small acid-soluble oligonucleotides. This chain is Exodeoxyribonuclease 7 large subunit, found in Shewanella denitrificans (strain OS217 / ATCC BAA-1090 / DSM 15013).